The primary structure comprises 254 residues: Ditrans,polycis-undecaprenyl-diphosphate synthase ((2E,6E)-farnesyl-diphosphate specific) (254 aa).

The active site involves aspartate 25. Aspartate 25 provides a ligand contact to Mg(2+). Substrate contacts are provided by residues 26-29 (GNGR), tryptophan 30, arginine 38, histidine 42, and 70-72 (SSE). Asparagine 73 functions as the Proton acceptor in the catalytic mechanism. Substrate is bound by residues tryptophan 74, arginine 76, and arginine 193. Position 198 (histidine 198) interacts with Mg(2+). 199–201 (RIS) contacts substrate. Residue glutamate 212 participates in Mg(2+) binding.

This sequence belongs to the UPP synthase family. Homodimer. It depends on Mg(2+) as a cofactor.

It catalyses the reaction 8 isopentenyl diphosphate + (2E,6E)-farnesyl diphosphate = di-trans,octa-cis-undecaprenyl diphosphate + 8 diphosphate. Catalyzes the sequential condensation of isopentenyl diphosphate (IPP) with (2E,6E)-farnesyl diphosphate (E,E-FPP) to yield (2Z,6Z,10Z,14Z,18Z,22Z,26Z,30Z,34E,38E)-undecaprenyl diphosphate (di-trans,octa-cis-UPP). UPP is the precursor of glycosyl carrier lipid in the biosynthesis of bacterial cell wall polysaccharide components such as peptidoglycan and lipopolysaccharide. The polypeptide is Ditrans,polycis-undecaprenyl-diphosphate synthase ((2E,6E)-farnesyl-diphosphate specific) (Photorhabdus laumondii subsp. laumondii (strain DSM 15139 / CIP 105565 / TT01) (Photorhabdus luminescens subsp. laumondii)).